A 747-amino-acid polypeptide reads, in one-letter code: Fatty acid oxidation complex subunit alpha (747 aa).

The enoyl-CoA hydratase stretch occupies residues 1–197 (MGASATNSVT…KMGLVDDVVP (197 aa)). The 3-hydroxyacyl-CoA dehydrogenase stretch occupies residues 313–747 (RAIHRVGVLG…NIDEVTDVAS (435 aa)). Residues 590-614 (YLYSNPTKNSSPTKNGNSPAKRNSF) are disordered. Residues 593 to 610 (SNPTKNSSPTKNGNSPAK) show a composition bias toward polar residues.

It in the N-terminal section; belongs to the enoyl-CoA hydratase/isomerase family. The protein in the central section; belongs to the 3-hydroxyacyl-CoA dehydrogenase family. In terms of assembly, heterotetramer of two alpha chains (FadJ) and two beta chains (FadI).

Its subcellular location is the cytoplasm. The catalysed reaction is a (3S)-3-hydroxyacyl-CoA = a (2E)-enoyl-CoA + H2O. It carries out the reaction a 4-saturated-(3S)-3-hydroxyacyl-CoA = a (3E)-enoyl-CoA + H2O. The enzyme catalyses a (3S)-3-hydroxyacyl-CoA + NAD(+) = a 3-oxoacyl-CoA + NADH + H(+). It catalyses the reaction (3S)-3-hydroxybutanoyl-CoA = (3R)-3-hydroxybutanoyl-CoA. It participates in lipid metabolism; fatty acid beta-oxidation. Its function is as follows. Catalyzes the formation of a hydroxyacyl-CoA by addition of water on enoyl-CoA. Also exhibits 3-hydroxyacyl-CoA epimerase and 3-hydroxyacyl-CoA dehydrogenase activities. The protein is Fatty acid oxidation complex subunit alpha of Yersinia pseudotuberculosis serotype O:1b (strain IP 31758).